A 252-amino-acid polypeptide reads, in one-letter code: Urease accessory protein UreD (252 aa).

Belongs to the UreD family. As to quaternary structure, ureD, UreF and UreG form a complex that acts as a GTP-hydrolysis-dependent molecular chaperone, activating the urease apoprotein by helping to assemble the nickel containing metallocenter of UreC. The UreE protein probably delivers the nickel.

The protein resides in the cytoplasm. Functionally, required for maturation of urease via the functional incorporation of the urease nickel metallocenter. The chain is Urease accessory protein UreD from Streptomyces avermitilis (strain ATCC 31267 / DSM 46492 / JCM 5070 / NBRC 14893 / NCIMB 12804 / NRRL 8165 / MA-4680).